A 161-amino-acid polypeptide reads, in one-letter code: Nucleotide-binding protein BamMC406_2474 (161 aa).

This sequence belongs to the YajQ family.

Nucleotide-binding protein. The protein is Nucleotide-binding protein BamMC406_2474 of Burkholderia ambifaria (strain MC40-6).